We begin with the raw amino-acid sequence, 716 residues long: ATP-dependent DNA helicase DinG (716 aa).

Residues 17–294 enclose the Helicase ATP-binding domain; the sequence is ALQEQIPDFI…TCMEQFRPKT (278 aa). ATP is bound at residue 54 to 61; sequence APTGVGKT. Residue cysteine 120 coordinates [4Fe-4S] cluster. The short motif at 131-134 is the DEAH box element; sequence EPTQ. Cysteine 194, cysteine 199, and cysteine 205 together coordinate [4Fe-4S] cluster. The DEAH box signature appears at 248-251; it reads DEGH. Positions 487-698 constitute a Helicase C-terminal domain; it reads ALDSPFNHCE…VFPIEQPEVP (212 aa).

The protein belongs to the helicase family. DinG subfamily. Type 1 sub-subfamily. [4Fe-4S] cluster serves as cofactor.

The enzyme catalyses Couples ATP hydrolysis with the unwinding of duplex DNA at the replication fork by translocating in the 5'-3' direction. This creates two antiparallel DNA single strands (ssDNA). The leading ssDNA polymer is the template for DNA polymerase III holoenzyme which synthesizes a continuous strand.. It carries out the reaction ATP + H2O = ADP + phosphate + H(+). DNA-dependent ATPase and 5'-3' DNA helicase. Unwinds D-loops, R-loops, forked DNA and G-quadruplex DNA. This is ATP-dependent DNA helicase DinG from Shigella flexneri.